A 144-amino-acid chain; its full sequence is Large ribosomal subunit protein uL11 (144 aa).

The protein belongs to the universal ribosomal protein uL11 family. Part of the ribosomal stalk of the 50S ribosomal subunit. Interacts with L10 and the large rRNA to form the base of the stalk. L10 forms an elongated spine to which L12 dimers bind in a sequential fashion forming a multimeric L10(L12)X complex. One or more lysine residues are methylated.

Functionally, forms part of the ribosomal stalk which helps the ribosome interact with GTP-bound translation factors. The chain is Large ribosomal subunit protein uL11 from Marinomonas sp. (strain MWYL1).